A 380-amino-acid polypeptide reads, in one-letter code: 3-dehydroquinate synthase (380 aa).

Residues 100–104 (GAASD), 124–125 (TT), K137, and K146 each bind NAD(+). E179, H251, and H267 together coordinate Zn(2+).

The protein belongs to the sugar phosphate cyclases superfamily. Dehydroquinate synthase family. NAD(+) is required as a cofactor. The cofactor is Co(2+). Requires Zn(2+) as cofactor.

It localises to the cytoplasm. The catalysed reaction is 7-phospho-2-dehydro-3-deoxy-D-arabino-heptonate = 3-dehydroquinate + phosphate. It functions in the pathway metabolic intermediate biosynthesis; chorismate biosynthesis; chorismate from D-erythrose 4-phosphate and phosphoenolpyruvate: step 2/7. Catalyzes the conversion of 3-deoxy-D-arabino-heptulosonate 7-phosphate (DAHP) to dehydroquinate (DHQ). The chain is 3-dehydroquinate synthase from Tropheryma whipplei (strain TW08/27) (Whipple's bacillus).